The primary structure comprises 247 residues: Transcription factor bHLH92 (247 aa).

Residues 85-134 (ERSRRHMLKERTRREKQKQSYLALHSLLPFATKNDKNSIVEKAVDEIAKL) enclose the bHLH domain.

Homodimer.

It is found in the nucleus. This Arabidopsis thaliana (Mouse-ear cress) protein is Transcription factor bHLH92 (BHLH92).